Here is a 363-residue protein sequence, read N- to C-terminus: MIVALPPLMVAEKPPMALVLGLESSCDETAVALVDNDGNIISSHLATQEILHRPYGGVVPEIAARAHVERLEPLVRKVLNESGKNLSEIDAIAATAGPGLIGGVMVGFVTGKALSLACKKPLIAINHLEGHALTPRLADKTLSFPYLLLLISGGHCQILLVKNVGEYRRLATTIDDAGGEAFDKTAKILGLGFPGGPAVEREALNGDPMAVPLPRPLIKSKEPHFSFAGLKTAVLRAYQSGIYKRHDIAASFQQAVIDCLVNRSEKALKKIEGENIQINAFVIAGGMAANQAIRPALTDLAEAHNLPLIAPPPSLCTDNGAMIAWAGVERFRLGMIDNLESPARARWPLDPHAEKARGAGVKA.

Residues H127 and H131 each coordinate Fe cation. Substrate-binding positions include 150–154 (LISGG), D183, G196, and N290. A Fe cation-binding site is contributed by D318.

It belongs to the KAE1 / TsaD family. It depends on Fe(2+) as a cofactor.

The protein localises to the cytoplasm. It catalyses the reaction L-threonylcarbamoyladenylate + adenosine(37) in tRNA = N(6)-L-threonylcarbamoyladenosine(37) in tRNA + AMP + H(+). Required for the formation of a threonylcarbamoyl group on adenosine at position 37 (t(6)A37) in tRNAs that read codons beginning with adenine. Is involved in the transfer of the threonylcarbamoyl moiety of threonylcarbamoyl-AMP (TC-AMP) to the N6 group of A37, together with TsaE and TsaB. TsaD likely plays a direct catalytic role in this reaction. The chain is tRNA N6-adenosine threonylcarbamoyltransferase from Zymomonas mobilis subsp. mobilis (strain ATCC 31821 / ZM4 / CP4).